Here is a 235-residue protein sequence, read N- to C-terminus: Protein LIFEGUARD 1 (235 aa).

Transmembrane regions (helical) follow at residues Tyr33–Val53, Leu67–Phe87, Cys95–Leu115, Ile120–Phe140, Phe149–Leu169, Leu178–Asp198, and Ile212–Ile232.

This sequence belongs to the BI1 family. In terms of tissue distribution, expressed at very low in leaves.

Its subcellular location is the membrane. In terms of biological role, (Microbial infection) Facilitates the development of the powdery mildew fungus E.cruciferarum. (Microbial infection) May prevent cell death upon A.alternata f.sp. lycopersici (AAL) toxin treatment. The chain is Protein LIFEGUARD 1 from Arabidopsis thaliana (Mouse-ear cress).